The chain runs to 283 residues: MSIKKRKPTINSQRQYSVDDKEDITTTDPERSLLEPLPNSGGRNNQGRMTMRYRGGGHKRRYRKIDFKRRDKDGIPATVKTIEYDPNRSARISLLAYADGEKRYIITPDGLEVGDTVMNGPQAQAEVGNCLPLTSIPLGTKVHCVEMTPEKGAQMVRAAGTHAQLTAREGDYATLELPSGETRLVPSKCRATVGTTSNVEHENVVLGKAGRKRWLGRRPRTRGVAMNPIDHPMGGGEGLKSGGHPRSREGVPAKGYKTRKRNKESNKYIIRRRTESKQGTGGQ.

Disordered regions lie at residues 1 to 59 (MSIK…GGHK) and 222 to 283 (RGVA…TGGQ).

Belongs to the universal ribosomal protein uL2 family. As to quaternary structure, part of the 50S ribosomal subunit. Forms a bridge to the 30S subunit in the 70S ribosome.

Its function is as follows. One of the primary rRNA binding proteins. Required for association of the 30S and 50S subunits to form the 70S ribosome, for tRNA binding and peptide bond formation. It has been suggested to have peptidyltransferase activity; this is somewhat controversial. Makes several contacts with the 16S rRNA in the 70S ribosome. This chain is Large ribosomal subunit protein uL2, found in Salinibacter ruber (strain DSM 13855 / M31).